A 339-amino-acid polypeptide reads, in one-letter code: Phosphate acyltransferase (339 aa).

This sequence belongs to the PlsX family. Homodimer. Probably interacts with PlsY.

It is found in the cytoplasm. The catalysed reaction is a fatty acyl-[ACP] + phosphate = an acyl phosphate + holo-[ACP]. It functions in the pathway lipid metabolism; phospholipid metabolism. In terms of biological role, catalyzes the reversible formation of acyl-phosphate (acyl-PO(4)) from acyl-[acyl-carrier-protein] (acyl-ACP). This enzyme utilizes acyl-ACP as fatty acyl donor, but not acyl-CoA. This is Phosphate acyltransferase from Aeromonas salmonicida (strain A449).